The sequence spans 232 residues: Peroxisomal protein PEX21 (232 aa).

A Glycyl cysteine thioester (Cys-Gly) (interchain with G-Cter in ubiquitin) cross-link involves residue Cys-5.

This sequence belongs to the peroxin-21 family. As to quaternary structure, interacts with PEX7. Post-translationally, monoubiquitinated at Cys-5; acts as a signal for PEX21 extraction and is required for proper export from peroxisomes and recycling.

The protein resides in the cytoplasm. It localises to the cytosol. It is found in the peroxisome. Functionally, mediates peroxisomal import of proteins containing a C-terminal PTS2-type peroxisomal targeting signal via its interaction with PEX7. Interaction with PEX7 only takes place when PEX7 is associated with cargo proteins containing a PTS2 peroxisomal targeting signal. PEX7 along with PTS2-containing cargo proteins are then translocated through the PEX13-PEX14 docking complex together with PEX21. The sequence is that of Peroxisomal protein PEX21 (PEX21) from Candida glabrata (strain ATCC 2001 / BCRC 20586 / JCM 3761 / NBRC 0622 / NRRL Y-65 / CBS 138) (Yeast).